A 259-amino-acid chain; its full sequence is uncharacterized protein (259 aa).

A divalent metal cation contacts are provided by H9, H11, E97, H133, H157, and D207.

Belongs to the metallo-dependent hydrolases superfamily. TatD-type hydrolase family. Requires a divalent metal cation as cofactor.

This is an uncharacterized protein from Escherichia coli (strain K12).